We begin with the raw amino-acid sequence, 147 residues long: Hemoglobin subunit beta (147 aa).

The residue at position 2 (V2) is an N-acetylvaline. Residues 3–147 enclose the Globin domain; sequence HLTPEEKSAV…VANALAHKYH (145 aa). At T13 the chain carries Phosphothreonine. S45 bears the Phosphoserine mark. Residue K60 is modified to N6-acetyllysine. H64 serves as a coordination point for heme b. N6-acetyllysine is present on K83. H93 contributes to the heme b binding site. C94 is modified (S-nitrosocysteine). An N6-acetyllysine modification is found at K145.

It belongs to the globin family. Heterotetramer of two alpha chains and two beta chains. Red blood cells.

In terms of biological role, involved in oxygen transport from the lung to the various peripheral tissues. This chain is Hemoglobin subunit beta (HBB), found in Gorilla gorilla gorilla (Western lowland gorilla).